A 335-amino-acid chain; its full sequence is E3 ubiquitin ligase rnf-121 (335 aa).

Over 1–47 (MGQHGAIRLQNEVQEGMPPPHELTEEEQWAEEHRKMHEKHKGHEAMH) the chain is Cytoplasmic. Residues 48 to 68 (MEMMVIFMISVIVGQIFLVTW) traverse the membrane as a helical segment. The Lumenal segment spans residues 69–72 (KRKH). Residues 73–93 (FKSYQMCTLIGMLTIPVYVCF) traverse the membrane as a helical segment. The Cytoplasmic portion of the chain corresponds to 94-99 (NRSWYR). A helical transmembrane segment spans residues 100-120 (FLATWLVFCIFSAFIWLKASA). Residues 121–143 (QHISGGTPRFVYKWFLFLHKLSY) are Lumenal-facing. The helical transmembrane segment at 144–164 (VLGVVGYLIMMGALLGFHVLF) threads the bilayer. Residues 165 to 168 (GVSQ) are Cytoplasmic-facing. Residues 169 to 189 (PTLMDAGILFMFYGVYYGVLG) traverse the membrane as a helical segment. At 190–335 (RDFAHICTAR…QGLTTWMGLE (146 aa)) the chain is on the lumenal side. The RING-type; atypical zinc-finger motif lies at 222-284 (CAVCGGRLDD…GKLQTCPYCK (63 aa)).

Belongs to the RNF121 family. In terms of tissue distribution, expressed in body wall muscles, the hypodermis, seam cells, vulval cells, spermathecal cells, uterine cells and the distal tip cell (at protein level).

It localises to the endoplasmic reticulum membrane. The protein localises to the golgi apparatus membrane. It catalyses the reaction S-ubiquitinyl-[E2 ubiquitin-conjugating enzyme]-L-cysteine + [acceptor protein]-L-lysine = [E2 ubiquitin-conjugating enzyme]-L-cysteine + N(6)-ubiquitinyl-[acceptor protein]-L-lysine.. It participates in protein modification; protein ubiquitination. E3 ubiquitin ligase which accepts ubiquitin and transfers it to substrates such as the beta-integrin subunit pat-3, promoting their degradation by the endoplasmic reticulum-associated degradation (ERAD) pathway which is a pathway involved in ubiquitin-dependent degradation of misfolded endoplasmic reticulum proteins. Negatively regulates the unfolded protein response to reduce endoplasmic reticulum stress. Required for the cessation of distal tip cell migration at the end of larval morphogenesis. Plays a role in germline and gonad development. The sequence is that of E3 ubiquitin ligase rnf-121 from Caenorhabditis elegans.